A 248-amino-acid chain; its full sequence is Probable transcriptional regulatory protein Desal_2886 (248 aa).

The segment at 1 to 21 (MAGHSKWANIQHRKGRQDAKR) is disordered.

It belongs to the TACO1 family.

It is found in the cytoplasm. This is Probable transcriptional regulatory protein Desal_2886 from Maridesulfovibrio salexigens (strain ATCC 14822 / DSM 2638 / NCIMB 8403 / VKM B-1763) (Desulfovibrio salexigens).